The sequence spans 396 residues: Lipid-A-disaccharide synthase (396 aa).

This sequence belongs to the LpxB family.

The catalysed reaction is a lipid X + a UDP-2-N,3-O-bis[(3R)-3-hydroxyacyl]-alpha-D-glucosamine = a lipid A disaccharide + UDP + H(+). It functions in the pathway bacterial outer membrane biogenesis; LPS lipid A biosynthesis. Functionally, condensation of UDP-2,3-diacylglucosamine and 2,3-diacylglucosamine-1-phosphate to form lipid A disaccharide, a precursor of lipid A, a phosphorylated glycolipid that anchors the lipopolysaccharide to the outer membrane of the cell. The sequence is that of Lipid-A-disaccharide synthase from Rhodopseudomonas palustris (strain BisB18).